Here is a 396-residue protein sequence, read N- to C-terminus: Metallophosphoesterase 1 (396 aa).

Residues 27–47 (IAVVFAVLLFCEFLIYYLAIF) traverse the membrane as a helical segment. Residues Asp77, Asp119, Asn157, His249, His303, and His305 each contribute to the a divalent metal cation site. A helical transmembrane segment spans residues 356-376 (VVLVIYCGAVGFLVVLTLSHL). The short motif at 392–396 (KRKTR) is the Di-lysine motif element.

It belongs to the metallophosphoesterase superfamily. MPPE1 family. As to quaternary structure, interacts with GPI-anchor proteins (via the GPI portion). Interacts with TMED10. Requires Mn(2+) as cofactor.

It localises to the endoplasmic reticulum-Golgi intermediate compartment membrane. Metallophosphoesterase that catalyzes the removal of a side-chain ethanolamine-phosphate (EtNP) from the second mannose of the GPI-anchor protein intermediate. Participates in the glycan remodeling steps of GPI-anchor maturation to allow an efficient transport of GPI-anchor proteins from the endoplasmic reticulum to the Golgi. The protein is Metallophosphoesterase 1 of Macaca fascicularis (Crab-eating macaque).